The sequence spans 178 residues: Cytochrome b6-f complex iron-sulfur subunit 2 (178 aa).

A helical transmembrane segment spans residues 17 to 36; it reads LLNFFTGAIVATTASAAIYP. The region spanning 61-161 is the Rieske domain; it reads GHPIPASQIL…VQVKDDYIWI (101 aa). [2Fe-2S] cluster contacts are provided by Cys107, His109, Cys125, and His128. Cys112 and Cys127 are joined by a disulfide.

Belongs to the Rieske iron-sulfur protein family. As to quaternary structure, the 4 large subunits of the cytochrome b6-f complex are cytochrome b6, subunit IV (17 kDa polypeptide, PetD), cytochrome f and the Rieske protein, while the 4 small subunits are PetG, PetL, PetM and PetN. The complex functions as a dimer. [2Fe-2S] cluster is required as a cofactor.

It is found in the cellular thylakoid membrane. The enzyme catalyses 2 oxidized [plastocyanin] + a plastoquinol + 2 H(+)(in) = 2 reduced [plastocyanin] + a plastoquinone + 4 H(+)(out). Component of the cytochrome b6-f complex, which mediates electron transfer between photosystem II (PSII) and photosystem I (PSI), cyclic electron flow around PSI, and state transitions. The chain is Cytochrome b6-f complex iron-sulfur subunit 2 from Nostoc sp. (strain PCC 7120 / SAG 25.82 / UTEX 2576).